The primary structure comprises 1465 residues: DNA polymerase III polC-type (1465 aa).

The Exonuclease domain occupies 427-583 (YVVFDVETTG…YDAEATGRLL (157 aa)).

The protein belongs to the DNA polymerase type-C family. PolC subfamily.

The protein localises to the cytoplasm. It catalyses the reaction DNA(n) + a 2'-deoxyribonucleoside 5'-triphosphate = DNA(n+1) + diphosphate. Its function is as follows. Required for replicative DNA synthesis. This DNA polymerase also exhibits 3' to 5' exonuclease activity. This chain is DNA polymerase III polC-type, found in Streptococcus pyogenes serotype M3 (strain ATCC BAA-595 / MGAS315).